Reading from the N-terminus, the 298-residue chain is N-acetylmuramic acid 6-phosphate etherase (298 aa).

The 164-residue stretch at 55-218 (IHAQVSGGGR…STGLMIKSGK (164 aa)) folds into the SIS domain. The active-site Proton donor is glutamate 83. Glutamate 114 is an active-site residue.

Belongs to the GCKR-like family. MurNAc-6-P etherase subfamily. In terms of assembly, homodimer.

It carries out the reaction N-acetyl-D-muramate 6-phosphate + H2O = N-acetyl-D-glucosamine 6-phosphate + (R)-lactate. The protein operates within amino-sugar metabolism; 1,6-anhydro-N-acetylmuramate degradation. It participates in amino-sugar metabolism; N-acetylmuramate degradation. Its pathway is cell wall biogenesis; peptidoglycan recycling. Functionally, specifically catalyzes the cleavage of the D-lactyl ether substituent of MurNAc 6-phosphate, producing GlcNAc 6-phosphate and D-lactate. Together with AnmK, is also required for the utilization of anhydro-N-acetylmuramic acid (anhMurNAc) either imported from the medium or derived from its own cell wall murein, and thus plays a role in cell wall recycling. The chain is N-acetylmuramic acid 6-phosphate etherase from Escherichia coli O17:K52:H18 (strain UMN026 / ExPEC).